The following is a 389-amino-acid chain: S-adenosylmethionine synthase (389 aa).

H17 contacts ATP. Residue D19 coordinates Mg(2+). E45 serves as a coordination point for K(+). L-methionine-binding residues include E58 and Q101. The interval 101–111 (QSPDISQGVDG) is flexible loop. ATP contacts are provided by residues 170 to 172 (DSK), 237 to 238 (RF), D246, 252 to 253 (RK), A269, and K273. Residue D246 coordinates L-methionine. K277 is a binding site for L-methionine.

This sequence belongs to the AdoMet synthase family. Homotetramer; dimer of dimers. The cofactor is Mg(2+). K(+) is required as a cofactor.

Its subcellular location is the cytoplasm. The catalysed reaction is L-methionine + ATP + H2O = S-adenosyl-L-methionine + phosphate + diphosphate. It functions in the pathway amino-acid biosynthesis; S-adenosyl-L-methionine biosynthesis; S-adenosyl-L-methionine from L-methionine: step 1/1. Its function is as follows. Catalyzes the formation of S-adenosylmethionine (AdoMet) from methionine and ATP. The overall synthetic reaction is composed of two sequential steps, AdoMet formation and the subsequent tripolyphosphate hydrolysis which occurs prior to release of AdoMet from the enzyme. The protein is S-adenosylmethionine synthase of Treponema denticola (strain ATCC 35405 / DSM 14222 / CIP 103919 / JCM 8153 / KCTC 15104).